A 138-amino-acid polypeptide reads, in one-letter code: MPKNKGKGGKNRRRGKNENENEKRELTYAEEGQMYAQVTKMLGNGRIEAACFDGVKRLGHIRGKLRKKVWINQGDIILLSLREFQDEKGDVILKYTADEARTLKNQGELPETAKINETDTFGAEGEDDLDFEFDVDAI.

A compositionally biased stretch (basic residues) spans 1–15; it reads MPKNKGKGGKNRRRG. Positions 1-28 are disordered; sequence MPKNKGKGGKNRRRGKNENENEKRELTY. Positions 16 to 27 are enriched in basic and acidic residues; the sequence is KNENENEKRELT. Positions 22–96 constitute an S1-like domain; sequence EKRELTYAEE…EKGDVILKYT (75 aa).

Belongs to the eIF-1A family.

Its function is as follows. Seems to be required for maximal rate of protein biosynthesis. Enhances ribosome dissociation into subunits and stabilizes the binding of the initiator Met-tRNA(I) to 40 S ribosomal subunits. This Schizosaccharomyces pombe (strain 972 / ATCC 24843) (Fission yeast) protein is Eukaryotic translation initiation factor 1A (tif11).